The following is a 472-amino-acid chain: Poly(A) polymerase catalytic subunit (472 aa).

Residues Asp194 and Asp196 contribute to the active site.

It belongs to the poxviridae poly(A) polymerase catalytic subunit family. Heterodimer of a large (catalytic) subunit and a small (regulatory) subunit.

It carries out the reaction RNA(n) + ATP = RNA(n)-3'-adenine ribonucleotide + diphosphate. Its function is as follows. Polymerase that creates the 3'-poly(A) tail of mRNA's. In Serinus (CNPV), this protein is Poly(A) polymerase catalytic subunit (PAPL).